We begin with the raw amino-acid sequence, 210 residues long: Urease accessory protein UreF (210 aa).

Belongs to the UreF family. In terms of assembly, ureD, UreF and UreG form a complex that acts as a GTP-hydrolysis-dependent molecular chaperone, activating the urease apoprotein by helping to assemble the nickel containing metallocenter of UreC. The UreE protein probably delivers the nickel.

The protein resides in the cytoplasm. Required for maturation of urease via the functional incorporation of the urease nickel metallocenter. The chain is Urease accessory protein UreF from Cereibacter sphaeroides (strain ATCC 17025 / ATH 2.4.3) (Rhodobacter sphaeroides).